We begin with the raw amino-acid sequence, 292 residues long: 2-hydroxy-3-oxopropionate reductase (292 aa).

NAD(+) contacts are provided by residues 4–18 and Ser-94; that span reads GFIGLGIMGTPMAIN. Residue Lys-169 is part of the active site. Position 237 (Lys-237) interacts with NAD(+).

The protein belongs to the HIBADH-related family.

It carries out the reaction (R)-glycerate + NADP(+) = 2-hydroxy-3-oxopropanoate + NADPH + H(+). The enzyme catalyses (R)-glycerate + NAD(+) = 2-hydroxy-3-oxopropanoate + NADH + H(+). It functions in the pathway organic acid metabolism; glycolate degradation; 3-phospho-D-glycerate from glycolate: step 3/4. This Escherichia coli (strain K12) protein is 2-hydroxy-3-oxopropionate reductase (glxR).